The primary structure comprises 405 residues: Ubiquitin-like modifier-activating enzyme 5 (405 aa).

The interval 1 to 44 (MATVEELQTRVKQLEEELERERTRNRGGTDGGGGRKKIDQMSSE) is disordered. The segment covering 7-24 (LQTRVKQLEEELERERTR) has biased composition (basic and acidic residues). Residues Gly81, Asp102, Lys125, Asn148, and Asn182 each coordinate ATP. Zn(2+)-binding residues include Cys224 and Cys227. The active-site Glycyl thioester intermediate is Cys248. Zn(2+) contacts are provided by Cys301 and Cys306. A linker region spans residues 346 to 377 (AETTEEELKAASHGHVPELVEGVHVAYVRPMT). Positions 390-405 (DDQESLEDLMAKMKSI) match the UFC1-binding sequence (UFC) motif.

It belongs to the ubiquitin-activating E1 family. UBA5 subfamily. In terms of assembly, homodimer; homodimerization is required for UFM1 activation. Interacts (via UIS motif) with UFM1; binds UFM1 via a trans-binding mechanism in which UFM1 interacts with distinct sites in both subunits of the UBA5 homodimer. Interacts (via C-terminus) with UFC1.

The protein resides in the cytoplasm. It localises to the nucleus. It is found in the endoplasmic reticulum membrane. Its subcellular location is the golgi apparatus. E1-like enzyme which specifically catalyzes the first step in ufmylation. Activates UFM1 by first adenylating its C-terminal glycine residue with ATP, and thereafter linking this residue to the side chain of a cysteine residue in E1, yielding a UFM1-E1 thioester and free AMP. Activates UFM1 via a trans-binding mechanism, in which UFM1 interacts with distinct sites in both subunits of the UBA5 homodimer. Trans-binding also promotes stabilization of the UBA5 homodimer, and enhances ATP-binding. Transfer of UFM1 from UBA5 to the E2-like enzyme UFC1 also takes place using a trans mechanism. In Branchiostoma floridae (Florida lancelet), this protein is Ubiquitin-like modifier-activating enzyme 5.